A 364-amino-acid polypeptide reads, in one-letter code: tRNA-specific 2-thiouridylase MnmA 1 (364 aa).

Residues 10-17 (GMSGGVDS) and M36 each bind ATP. Residue C106 is the Nucleophile of the active site. C106 and C204 form a disulfide bridge. G130 provides a ligand contact to ATP. The interaction with tRNA stretch occupies residues 154 to 156 (KDQ). C204 (cysteine persulfide intermediate) is an active-site residue. The segment at 310 to 311 (RY) is interaction with tRNA.

This sequence belongs to the MnmA/TRMU family.

The protein localises to the cytoplasm. It catalyses the reaction S-sulfanyl-L-cysteinyl-[protein] + uridine(34) in tRNA + AH2 + ATP = 2-thiouridine(34) in tRNA + L-cysteinyl-[protein] + A + AMP + diphosphate + H(+). Functionally, catalyzes the 2-thiolation of uridine at the wobble position (U34) of tRNA, leading to the formation of s(2)U34. This Caldanaerobacter subterraneus subsp. tengcongensis (strain DSM 15242 / JCM 11007 / NBRC 100824 / MB4) (Thermoanaerobacter tengcongensis) protein is tRNA-specific 2-thiouridylase MnmA 1.